Here is a 488-residue protein sequence, read N- to C-terminus: Inosine-5'-monophosphate dehydrogenase (488 aa).

CBS domains follow at residues 95–153 (VISN…SIKI) and 157–216 (MTQE…AKDE). NAD(+) contacts are provided by residues Asp250 and 300–302 (GIG). Gly302 and Gly304 together coordinate K(+). Ser305 serves as a coordination point for IMP. Residue Cys307 coordinates K(+). The active-site Thioimidate intermediate is Cys307. IMP contacts are provided by residues 340-342 (DGG), 363-364 (GS), and 387-391 (YRGMG). The Proton acceptor role is filled by Arg403. Glu417 contacts IMP. A disordered region spans residues 468–488 (GLAESHPHNIQITKESPNYSF). Residues Glu471, Ser472, and His473 each coordinate K(+). Positions 475–488 (HNIQITKESPNYSF) are enriched in polar residues.

It belongs to the IMPDH/GMPR family. As to quaternary structure, homotetramer. K(+) serves as cofactor.

It catalyses the reaction IMP + NAD(+) + H2O = XMP + NADH + H(+). Its pathway is purine metabolism; XMP biosynthesis via de novo pathway; XMP from IMP: step 1/1. Its activity is regulated as follows. Mycophenolic acid (MPA) is a non-competitive inhibitor that prevents formation of the closed enzyme conformation by binding to the same site as the amobile flap. In contrast, mizoribine monophosphate (MZP) is a competitive inhibitor that induces the closed conformation. MPA is a potent inhibitor of mammalian IMPDHs but a poor inhibitor of the bacterial enzymes. MZP is a more potent inhibitor of bacterial IMPDH. Functionally, catalyzes the conversion of inosine 5'-phosphate (IMP) to xanthosine 5'-phosphate (XMP), the first committed and rate-limiting step in the de novo synthesis of guanine nucleotides, and therefore plays an important role in the regulation of cell growth. In Staphylococcus aureus (strain Mu50 / ATCC 700699), this protein is Inosine-5'-monophosphate dehydrogenase.